A 396-amino-acid polypeptide reads, in one-letter code: NADH-ubiquinone oxidoreductase 49 kDa subunit (396 aa).

This sequence belongs to the complex I 49 kDa subunit family.

The protein localises to the mitochondrion. The catalysed reaction is a ubiquinone + NADH + 5 H(+)(in) = a ubiquinol + NAD(+) + 4 H(+)(out). Its function is as follows. Core subunit of the mitochondrial membrane respiratory chain NADH dehydrogenase (Complex I) that is believed to belong to the minimal assembly required for catalysis. Complex I functions in the transfer of electrons from NADH to the respiratory chain. The immediate electron acceptor for the enzyme is believed to be ubiquinone. Component of the iron-sulfur (IP) fragment of the enzyme. Component of the iron-sulfur (IP) fragment of the enzyme. The protein is NADH-ubiquinone oxidoreductase 49 kDa subunit (NAD7) of Reclinomonas americana.